The chain runs to 374 residues: Queuine tRNA-ribosyltransferase (374 aa).

Catalysis depends on Asp-89, which acts as the Proton acceptor. Substrate-binding positions include 89 to 93 (DSGGF), Asp-143, Gln-187, and Gly-214. The tract at residues 245–251 (GVGKPED) is RNA binding. Asp-264 (nucleophile) is an active-site residue. The tract at residues 269–273 (TRNAR) is RNA binding; important for wobble base 34 recognition. The Zn(2+) site is built by Cys-302, Cys-304, Cys-307, and His-333.

It belongs to the queuine tRNA-ribosyltransferase family. Homodimer. Within each dimer, one monomer is responsible for RNA recognition and catalysis, while the other monomer binds to the replacement base PreQ1. It depends on Zn(2+) as a cofactor.

It carries out the reaction 7-aminomethyl-7-carbaguanine + guanosine(34) in tRNA = 7-aminomethyl-7-carbaguanosine(34) in tRNA + guanine. The protein operates within tRNA modification; tRNA-queuosine biosynthesis. Functionally, catalyzes the base-exchange of a guanine (G) residue with the queuine precursor 7-aminomethyl-7-deazaguanine (PreQ1) at position 34 (anticodon wobble position) in tRNAs with GU(N) anticodons (tRNA-Asp, -Asn, -His and -Tyr). Catalysis occurs through a double-displacement mechanism. The nucleophile active site attacks the C1' of nucleotide 34 to detach the guanine base from the RNA, forming a covalent enzyme-RNA intermediate. The proton acceptor active site deprotonates the incoming PreQ1, allowing a nucleophilic attack on the C1' of the ribose to form the product. After dissociation, two additional enzymatic reactions on the tRNA convert PreQ1 to queuine (Q), resulting in the hypermodified nucleoside queuosine (7-(((4,5-cis-dihydroxy-2-cyclopenten-1-yl)amino)methyl)-7-deazaguanosine). This is Queuine tRNA-ribosyltransferase from Psychromonas ingrahamii (strain DSM 17664 / CCUG 51855 / 37).